A 206-amino-acid chain; its full sequence is Endoplasmic reticulum transmembrane protein YET-like (206 aa).

Residues 1 to 2 (ME) lie on the Lumenal side of the membrane. A helical transmembrane segment spans residues 3–23 (FLMTLVFLVLLVEIVFCTFFM). Residues 24–46 (LPVSMHLRKNVYNKLDKLFGGQN) are Cytoplasmic-facing. A helical transmembrane segment spans residues 47–67 (AKIFLKVLALLVIIVFCDSIV). Over 68–101 (NSYNINKKLHTPELTGAKFDRQNEYTRMFRYQRN) the chain is Lumenal. A helical transmembrane segment spans residues 102 to 122 (SYICGFCLYLFFLIYRSQGII). Residues 123–206 (SQLSNVEASK…KKPKTQKKDD (84 aa)) lie on the Cytoplasmic side of the membrane. Residues 140–198 (KNNLNTVETLLSENEKLKTEIKDLKKMEKEHKAMKSQAENTTKEYLKLQEEYNQLLGKK) are a coiled coil. Positions 203 to 206 (KKDD) match the Di-lysine motif motif.

This sequence belongs to the BCAP29/BCAP31 family.

The protein resides in the endoplasmic reticulum membrane. Its function is as follows. May play a role in anterograde transport of membrane proteins from the endoplasmic reticulum to the Golgi. The protein is Endoplasmic reticulum transmembrane protein YET-like of Dictyostelium discoideum (Social amoeba).